A 671-amino-acid chain; its full sequence is DNA ligase (671 aa).

NAD(+)-binding positions include 32 to 36 (DAEYD), 81 to 82 (SL), and glutamate 113. Catalysis depends on lysine 115, which acts as the N6-AMP-lysine intermediate. The NAD(+) site is built by arginine 136, glutamate 173, lysine 290, and lysine 314. Positions 408, 411, 426, and 432 each coordinate Zn(2+). Positions 593–671 (EIDSPFAGKT…ETEMLRLLGS (79 aa)) constitute a BRCT domain.

It belongs to the NAD-dependent DNA ligase family. LigA subfamily. The cofactor is Mg(2+). Mn(2+) is required as a cofactor.

The enzyme catalyses NAD(+) + (deoxyribonucleotide)n-3'-hydroxyl + 5'-phospho-(deoxyribonucleotide)m = (deoxyribonucleotide)n+m + AMP + beta-nicotinamide D-nucleotide.. DNA ligase that catalyzes the formation of phosphodiester linkages between 5'-phosphoryl and 3'-hydroxyl groups in double-stranded DNA using NAD as a coenzyme and as the energy source for the reaction. It is essential for DNA replication and repair of damaged DNA. The protein is DNA ligase of Escherichia coli O6:H1 (strain CFT073 / ATCC 700928 / UPEC).